Reading from the N-terminus, the 205-residue chain is MIGKLKGVVDSYGEDFVILDVHGVGYEVHCSARTLQRLPPAGEATDLAIETVVREDMIRLYGFRSDAEREWFRLLQTVQGVGTRVALGLLSVLEPAELATAIATGDKGAVARAPGVGPRLAARLVAELKDKAPAFAPVDPALVRLAGAVEARTAPQPVADAISALVNLGYPQAQASAAVAAALQSAGAEAEAKTLIRLGLRELAR.

Residues 1-64 (MIGKLKGVVD…EDMIRLYGFR (64 aa)) are domain I. The segment at 65 to 143 (SDAEREWFRL…AFAPVDPALV (79 aa)) is domain II. The segment at 144–152 (RLAGAVEAR) is flexible linker. Positions 153-205 (TAPQPVADAISALVNLGYPQAQASAAVAAALQSAGAEAEAKTLIRLGLRELAR) are domain III.

It belongs to the RuvA family. In terms of assembly, homotetramer. Forms an RuvA(8)-RuvB(12)-Holliday junction (HJ) complex. HJ DNA is sandwiched between 2 RuvA tetramers; dsDNA enters through RuvA and exits via RuvB. An RuvB hexamer assembles on each DNA strand where it exits the tetramer. Each RuvB hexamer is contacted by two RuvA subunits (via domain III) on 2 adjacent RuvB subunits; this complex drives branch migration. In the full resolvosome a probable DNA-RuvA(4)-RuvB(12)-RuvC(2) complex forms which resolves the HJ.

It localises to the cytoplasm. In terms of biological role, the RuvA-RuvB-RuvC complex processes Holliday junction (HJ) DNA during genetic recombination and DNA repair, while the RuvA-RuvB complex plays an important role in the rescue of blocked DNA replication forks via replication fork reversal (RFR). RuvA specifically binds to HJ cruciform DNA, conferring on it an open structure. The RuvB hexamer acts as an ATP-dependent pump, pulling dsDNA into and through the RuvAB complex. HJ branch migration allows RuvC to scan DNA until it finds its consensus sequence, where it cleaves and resolves the cruciform DNA. In Methylobacterium sp. (strain 4-46), this protein is Holliday junction branch migration complex subunit RuvA.